A 316-amino-acid chain; its full sequence is Pantothenate kinase (316 aa).

Residue 95–102 participates in ATP binding; the sequence is GSVAVGKS.

The protein belongs to the prokaryotic pantothenate kinase family.

The protein resides in the cytoplasm. It carries out the reaction (R)-pantothenate + ATP = (R)-4'-phosphopantothenate + ADP + H(+). The protein operates within cofactor biosynthesis; coenzyme A biosynthesis; CoA from (R)-pantothenate: step 1/5. The chain is Pantothenate kinase from Shewanella woodyi (strain ATCC 51908 / MS32).